Reading from the N-terminus, the 179-residue chain is Inner membrane-spanning protein YciB (179 aa).

A run of 5 helical transmembrane segments spans residues 22 to 42 (IYVA…FTWF), 50 to 70 (MTLI…VFHN), 76 to 96 (WKVT…QLVL), 121 to 141 (LAWA…AFWL), and 149 to 169 (FKVF…GVYI).

This sequence belongs to the YciB family.

The protein resides in the cell inner membrane. Plays a role in cell envelope biogenesis, maintenance of cell envelope integrity and membrane homeostasis. In Serratia proteamaculans (strain 568), this protein is Inner membrane-spanning protein YciB.